A 230-amino-acid polypeptide reads, in one-letter code: Cytidylate kinase (230 aa).

12-20 provides a ligand contact to ATP; it reads GPSGAGKGT.

It belongs to the cytidylate kinase family. Type 1 subfamily.

The protein resides in the cytoplasm. The catalysed reaction is CMP + ATP = CDP + ADP. It carries out the reaction dCMP + ATP = dCDP + ADP. The sequence is that of Cytidylate kinase from Shewanella loihica (strain ATCC BAA-1088 / PV-4).